Here is a 168-residue protein sequence, read N- to C-terminus: Protein-export protein SecB (168 aa).

The protein belongs to the SecB family. As to quaternary structure, homotetramer, a dimer of dimers. One homotetramer interacts with 1 SecA dimer.

Its subcellular location is the cytoplasm. One of the proteins required for the normal export of preproteins out of the cell cytoplasm. It is a molecular chaperone that binds to a subset of precursor proteins, maintaining them in a translocation-competent state. It also specifically binds to its receptor SecA. The protein is Protein-export protein SecB of Sinorhizobium medicae (strain WSM419) (Ensifer medicae).